A 78-amino-acid polypeptide reads, in one-letter code: Acyl carrier protein (78 aa).

Residues 1 to 77 form the Carrier domain; that stretch reads MSEVEKKVID…DAIDYIEKNL (77 aa). S37 carries the O-(pantetheine 4'-phosphoryl)serine modification.

The protein belongs to the acyl carrier protein (ACP) family. 4'-phosphopantetheine is transferred from CoA to a specific serine of apo-ACP by AcpS. This modification is essential for activity because fatty acids are bound in thioester linkage to the sulfhydryl of the prosthetic group.

It is found in the cytoplasm. It participates in lipid metabolism; fatty acid biosynthesis. Its function is as follows. Carrier of the growing fatty acid chain in fatty acid biosynthesis. The protein is Acyl carrier protein of Porphyromonas gingivalis (strain ATCC 33277 / DSM 20709 / CIP 103683 / JCM 12257 / NCTC 11834 / 2561).